The chain runs to 427 residues: Probable glucuronosyltransferase Os03g0107900 (427 aa).

Residues 1 to 33 (MAMRGDPKQRRASASAPHGGAAHHVADKLRRHS) are Cytoplasmic-facing. Residues 34–54 (TFLLLLLLLWFALSLYLFLSA) form a helical; Signal-anchor for type II membrane protein membrane-spanning segment. Over 55–427 (TPPPPRPAFL…QRRHVESWKR (373 aa)) the chain is Lumenal. Asn-136, Asn-168, Asn-264, and Asn-374 each carry an N-linked (GlcNAc...) asparagine glycan.

It belongs to the glycosyltransferase 47 family.

Its subcellular location is the golgi apparatus membrane. Involved in the synthesis of glucuronoxylan hemicellulose in secondary cell walls. In Oryza sativa subsp. japonica (Rice), this protein is Probable glucuronosyltransferase Os03g0107900.